The chain runs to 572 residues: Proline--tRNA ligase (572 aa).

It belongs to the class-II aminoacyl-tRNA synthetase family. ProS type 1 subfamily. As to quaternary structure, homodimer.

It is found in the cytoplasm. It carries out the reaction tRNA(Pro) + L-proline + ATP = L-prolyl-tRNA(Pro) + AMP + diphosphate. Functionally, catalyzes the attachment of proline to tRNA(Pro) in a two-step reaction: proline is first activated by ATP to form Pro-AMP and then transferred to the acceptor end of tRNA(Pro). As ProRS can inadvertently accommodate and process non-cognate amino acids such as alanine and cysteine, to avoid such errors it has two additional distinct editing activities against alanine. One activity is designated as 'pretransfer' editing and involves the tRNA(Pro)-independent hydrolysis of activated Ala-AMP. The other activity is designated 'posttransfer' editing and involves deacylation of mischarged Ala-tRNA(Pro). The misacylated Cys-tRNA(Pro) is not edited by ProRS. This is Proline--tRNA ligase from Yersinia enterocolitica serotype O:8 / biotype 1B (strain NCTC 13174 / 8081).